The chain runs to 264 residues: 5'-nucleotidase SurE (264 aa).

The a divalent metal cation site is built by aspartate 10, aspartate 11, serine 43, and asparagine 99.

Belongs to the SurE nucleotidase family. It depends on a divalent metal cation as a cofactor.

Its subcellular location is the cytoplasm. It carries out the reaction a ribonucleoside 5'-phosphate + H2O = a ribonucleoside + phosphate. In terms of biological role, nucleotidase that shows phosphatase activity on nucleoside 5'-monophosphates. This is 5'-nucleotidase SurE from Methanococcus maripaludis (strain C6 / ATCC BAA-1332).